Consider the following 931-residue polypeptide: Short transient receptor potential channel 6 (931 aa).

Low complexity predominate over residues 1–23; sequence MSQSPAFGPRRGSSPRGAAGAAA. Residues 1 to 26 form a disordered region; it reads MSQSPAFGPRRGSSPRGAAGAAARRN. Topologically, residues 1 to 438 are cytoplasmic; it reads MSQSPAFGPR…CSKMGKIMRG (438 aa). ANK repeat units follow at residues 97–126, 132–161, 163–189, and 218–247; these read IEEE…SLNV, MGQN…LSRV, DALL…FAEG, and HDVT…RIER. A helical transmembrane segment spans residues 439-459; the sequence is PFMKFVAHAASFTIFLGLLVM. Over 460–487 the chain is Extracellular; sequence NAADRFEGTKLLPNETSTDNAKQLFRMK. N-linked (GlcNAc...) asparagine glycosylation is present at N473. A helical transmembrane segment spans residues 488-508; it reads TSCFSWMEMLIISWVIGMIWA. Residues 509 to 521 lie on the Cytoplasmic side of the membrane; it reads ECKEIWTQGPKEY. A helical membrane pass occupies residues 522–542; sequence LFELWNMLDFGMLAIFAASFI. Topologically, residues 543 to 592 are extracellular; that stretch reads ARFMAFWHASKAQSIIDANDTLKDLTKVTLGDNVKYYNLARIKWDPSDPQ. N-linked (GlcNAc...) asparagine glycosylation occurs at N561. The helical transmembrane segment at 593–613 threads the bilayer; that stretch reads IISEGLYAIAVVLSFSRIAYI. Residues 614–636 are Cytoplasmic-facing; the sequence is LPANESFGPLQISLGRTVKDIFK. A helical membrane pass occupies residues 637–657; the sequence is FMVIFIMVFVAFMIGMFNLYS. Topologically, residues 658-706 are extracellular; that stretch reads YYIGAKQNEAFTTVEESFKTLFWAIFGLSEVKSVVINYNHKFIENIGYV. A helical transmembrane segment spans residues 707 to 727; it reads LYGVYNVTMVIVLLNMLIAMI. Over 728 to 931 the chain is Cytoplasmic; that stretch reads NSSFQEIEDD…MEPNQEETNR (204 aa). S815 carries the post-translational modification Phosphoserine.

The protein belongs to the transient receptor (TC 1.A.4) family. STrpC subfamily. TRPC6 sub-subfamily. In terms of assembly, homodimer; forms channel complex. Interacts with MX1 and RNF24. In terms of processing, phosphorylated by FYN, leading to an increase of TRPC6 channel activity. Expressed primarily in placenta, lung, spleen, ovary and small intestine. Expressed in podocytes and is a component of the glomerular slit diaphragm.

Its subcellular location is the cell membrane. The catalysed reaction is Ca(2+)(in) = Ca(2+)(out). Its activity is regulated as follows. Activated by diacylglycerol (DAG) in a membrane-delimited fashion, independently of protein kinase C. Functionally, forms a receptor-activated non-selective calcium permeant cation channel. Probably is operated by a phosphatidylinositol second messenger system activated by receptor tyrosine kinases or G-protein coupled receptors. Activated by diacylglycerol (DAG) in a membrane-delimited fashion, independently of protein kinase C. Seems not to be activated by intracellular calcium store depletion. The polypeptide is Short transient receptor potential channel 6 (Homo sapiens (Human)).